The chain runs to 440 residues: UDP-N-acetylmuramoylalanine--D-glutamate ligase (440 aa).

ATP is bound at residue 109–115 (GTNGKTT).

Belongs to the MurCDEF family.

The protein localises to the cytoplasm. The enzyme catalyses UDP-N-acetyl-alpha-D-muramoyl-L-alanine + D-glutamate + ATP = UDP-N-acetyl-alpha-D-muramoyl-L-alanyl-D-glutamate + ADP + phosphate + H(+). Its pathway is cell wall biogenesis; peptidoglycan biosynthesis. Its function is as follows. Cell wall formation. Catalyzes the addition of glutamate to the nucleotide precursor UDP-N-acetylmuramoyl-L-alanine (UMA). This Rubrobacter xylanophilus (strain DSM 9941 / JCM 11954 / NBRC 16129 / PRD-1) protein is UDP-N-acetylmuramoylalanine--D-glutamate ligase.